Reading from the N-terminus, the 207-residue chain is Octanoyltransferase (207 aa).

The 176-residue stretch at 27-202 (GETPDELWIV…HLETRLARPQ (176 aa)) folds into the BPL/LPL catalytic domain. Substrate contacts are provided by residues 66–73 (RGGQITYH), 133–135 (SLG), and 146–148 (GLS). Catalysis depends on cysteine 164, which acts as the Acyl-thioester intermediate.

The protein belongs to the LipB family.

It localises to the cytoplasm. The enzyme catalyses octanoyl-[ACP] + L-lysyl-[protein] = N(6)-octanoyl-L-lysyl-[protein] + holo-[ACP] + H(+). It participates in protein modification; protein lipoylation via endogenous pathway; protein N(6)-(lipoyl)lysine from octanoyl-[acyl-carrier-protein]: step 1/2. Catalyzes the transfer of endogenously produced octanoic acid from octanoyl-acyl-carrier-protein onto the lipoyl domains of lipoate-dependent enzymes. Lipoyl-ACP can also act as a substrate although octanoyl-ACP is likely to be the physiological substrate. In Laribacter hongkongensis (strain HLHK9), this protein is Octanoyltransferase.